A 208-amino-acid chain; its full sequence is Imidazole glycerol phosphate synthase subunit HisH (208 aa).

Residues 2–208 (NVTIVDYNSG…LKIIENFLNL (207 aa)) enclose the Glutamine amidotransferase type-1 domain. The active-site Nucleophile is the Cys85. Residues His190 and Glu192 contribute to the active site.

Heterodimer of HisH and HisF.

Its subcellular location is the cytoplasm. It carries out the reaction 5-[(5-phospho-1-deoxy-D-ribulos-1-ylimino)methylamino]-1-(5-phospho-beta-D-ribosyl)imidazole-4-carboxamide + L-glutamine = D-erythro-1-(imidazol-4-yl)glycerol 3-phosphate + 5-amino-1-(5-phospho-beta-D-ribosyl)imidazole-4-carboxamide + L-glutamate + H(+). The enzyme catalyses L-glutamine + H2O = L-glutamate + NH4(+). It functions in the pathway amino-acid biosynthesis; L-histidine biosynthesis; L-histidine from 5-phospho-alpha-D-ribose 1-diphosphate: step 5/9. IGPS catalyzes the conversion of PRFAR and glutamine to IGP, AICAR and glutamate. The HisH subunit catalyzes the hydrolysis of glutamine to glutamate and ammonia as part of the synthesis of IGP and AICAR. The resulting ammonia molecule is channeled to the active site of HisF. The protein is Imidazole glycerol phosphate synthase subunit HisH of Pelagibacter ubique (strain HTCC1062).